The following is a 418-amino-acid chain: Gene 68 protein (418 aa).

Disordered stretches follow at residues 230 to 304 (IPAP…IHTL) and 353 to 418 (DTFE…ERRA). Residues 241–250 (RPSEGGDARP) are compositionally biased toward basic and acidic residues. Basic residues predominate over residues 257 to 266 (SRARSVHGRR). The span at 353–369 (DTFEDNRRDELRHDDSR) shows a compositional bias: basic and acidic residues. Basic residues predominate over residues 395–404 (PHLRRSRGRG).

This sequence belongs to the herpesviridae US2 family.

The chain is Gene 68 protein from Equine herpesvirus 1 (strain Ab4p) (EHV-1).